The chain runs to 35 residues: Photosystem II reaction center protein Psb30 (35 aa).

The helical transmembrane segment at leucine 7–isoleucine 27 threads the bilayer.

This sequence belongs to the Psb30/Ycf12 family. In terms of assembly, PSII is composed of 1 copy each of membrane proteins PsbA, PsbB, PsbC, PsbD, PsbE, PsbF, PsbH, PsbI, PsbJ, PsbK, PsbL, PsbM, PsbT, PsbX, PsbY, PsbZ, Psb30/Ycf12, peripheral proteins PsbO, CyanoQ (PsbQ), PsbU, PsbV and a large number of cofactors. It forms dimeric complexes.

It localises to the cellular thylakoid membrane. In terms of biological role, a core subunit of photosystem II (PSII), probably helps stabilize the reaction center. This is Photosystem II reaction center protein Psb30 from Synechococcus sp. (strain CC9311).